The sequence spans 452 residues: Glutathione gamma-glutamylcysteinyltransferase 2 (452 aa).

In terms of domain architecture, Peptidase C83 spans 1-220; the sequence is MSMASLYRRS…GFMLISRPHR (220 aa). Residues 287–315 adopt a coiled-coil conformation; sequence EDVNQNLSSEEKSRLKLKQELLKQVQETK.

This sequence belongs to the phytochelatin synthase family. In terms of tissue distribution, expressed in shoots, roots, leaves, stems and flowers.

The enzyme catalyses [Glu(-Cys)](n)-Gly + glutathione + H(+) = [Glu(-Cys)](n+1)-Gly + glycine. Its activity is regulated as follows. Requires cadmium for activity. Also activated in heterologous system by AsO(4)(3-) ions, but not by Cu(2+), Zn(2+), Mn(2+) or Ni(2+) ions. Involved in the synthesis of phytochelatins (PC) and homophytochelatins (hPC), the heavy-metal-binding peptides of plants. This chain is Glutathione gamma-glutamylcysteinyltransferase 2 (PCS2), found in Arabidopsis thaliana (Mouse-ear cress).